We begin with the raw amino-acid sequence, 273 residues long: 3-methyl-2-oxobutanoate hydroxymethyltransferase (273 aa).

2 residues coordinate Mg(2+): Asp-53 and Asp-92. 3-methyl-2-oxobutanoate-binding positions include 53–54, Asp-92, and Lys-122; that span reads DS. Mg(2+) is bound at residue Glu-124. Glu-191 (proton acceptor) is an active-site residue.

Belongs to the PanB family. In terms of assembly, homodecamer; pentamer of dimers. Requires Mg(2+) as cofactor.

The protein resides in the cytoplasm. The enzyme catalyses 3-methyl-2-oxobutanoate + (6R)-5,10-methylene-5,6,7,8-tetrahydrofolate + H2O = 2-dehydropantoate + (6S)-5,6,7,8-tetrahydrofolate. Its pathway is cofactor biosynthesis; (R)-pantothenate biosynthesis; (R)-pantoate from 3-methyl-2-oxobutanoate: step 1/2. Catalyzes the reversible reaction in which hydroxymethyl group from 5,10-methylenetetrahydrofolate is transferred onto alpha-ketoisovalerate to form ketopantoate. The chain is 3-methyl-2-oxobutanoate hydroxymethyltransferase from Bacteroides fragilis (strain ATCC 25285 / DSM 2151 / CCUG 4856 / JCM 11019 / LMG 10263 / NCTC 9343 / Onslow / VPI 2553 / EN-2).